Here is a 177-residue protein sequence, read N- to C-terminus: Dual-action ribosomal maturation protein DarP (177 aa).

This sequence belongs to the DarP family.

The protein resides in the cytoplasm. Its function is as follows. Member of a network of 50S ribosomal subunit biogenesis factors which assembles along the 30S-50S interface, preventing incorrect 23S rRNA structures from forming. Promotes peptidyl transferase center (PTC) maturation. The chain is Dual-action ribosomal maturation protein DarP from Histophilus somni (strain 2336) (Haemophilus somnus).